We begin with the raw amino-acid sequence, 301 residues long: NAD kinase (301 aa).

The Proton acceptor role is filled by D73. NAD(+) contacts are provided by residues 73–74, 160–161, R188, D190, A198, 201–206, A225, and Q257; these read DG, NE, and TAYNIS.

Belongs to the NAD kinase family. It depends on a divalent metal cation as a cofactor.

The protein resides in the cytoplasm. It carries out the reaction NAD(+) + ATP = ADP + NADP(+) + H(+). Functionally, involved in the regulation of the intracellular balance of NAD and NADP, and is a key enzyme in the biosynthesis of NADP. Catalyzes specifically the phosphorylation on 2'-hydroxyl of the adenosine moiety of NAD to yield NADP. The polypeptide is NAD kinase (Helicobacter hepaticus (strain ATCC 51449 / 3B1)).